A 301-amino-acid chain; its full sequence is NAD kinase 2 (301 aa).

The Proton acceptor role is filled by D77. Residues 77-78, R82, 151-152, K162, D181, and 192-197 each bind NAD(+); these read DG, NE, and TAYAFS.

The protein belongs to the NAD kinase family. A divalent metal cation serves as cofactor.

The protein localises to the cytoplasm. The enzyme catalyses NAD(+) + ATP = ADP + NADP(+) + H(+). Functionally, involved in the regulation of the intracellular balance of NAD and NADP, and is a key enzyme in the biosynthesis of NADP. Catalyzes specifically the phosphorylation on 2'-hydroxyl of the adenosine moiety of NAD to yield NADP. This Streptomyces coelicolor (strain ATCC BAA-471 / A3(2) / M145) protein is NAD kinase 2.